Reading from the N-terminus, the 513-residue chain is Putative ATP-dependent RNA helicase QP509L (513 aa).

Residues 110 to 262 form the Helicase ATP-binding domain; sequence KKLLSPYGRF…KIIIHHLGQP (153 aa). Position 123–130 (123–130) interacts with ATP; the sequence is LNTGLGKT. The DEAH box motif lies at 215 to 218; that stretch reads DEAH.

Belongs to the DEAD box helicase family. DEAH subfamily.

It catalyses the reaction ATP + H2O = ADP + phosphate + H(+). This is Putative ATP-dependent RNA helicase QP509L from Ornithodoros (relapsing fever ticks).